The sequence spans 100 residues: Phosphoribosyl-ATP pyrophosphatase (100 aa).

The protein belongs to the PRA-PH family.

The protein resides in the cytoplasm. It catalyses the reaction 1-(5-phospho-beta-D-ribosyl)-ATP + H2O = 1-(5-phospho-beta-D-ribosyl)-5'-AMP + diphosphate + H(+). The protein operates within amino-acid biosynthesis; L-histidine biosynthesis; L-histidine from 5-phospho-alpha-D-ribose 1-diphosphate: step 2/9. The chain is Phosphoribosyl-ATP pyrophosphatase from Haloquadratum walsbyi (strain DSM 16790 / HBSQ001).